The chain runs to 52 residues: Gastrin/cholecystokinin-like peptide (52 aa).

It belongs to the gastrin/cholecystokinin family.

The protein resides in the secreted. In terms of biological role, may control digestion processes. The protein is Gastrin/cholecystokinin-like peptide of Trachemys scripta (Red-eared slider turtle).